The chain runs to 1293 residues: DNA-directed RNA polymerase subunit beta' (1293 aa).

The Zn(2+) site is built by C60, C62, C75, and C78. Residues D535, D537, and D539 each coordinate Mg(2+). Positions 877, 953, 960, and 963 each coordinate Zn(2+).

This sequence belongs to the RNA polymerase beta' chain family. The RNAP catalytic core consists of 2 alpha, 1 beta, 1 beta' and 1 omega subunit. When a sigma factor is associated with the core the holoenzyme is formed, which can initiate transcription. Mg(2+) is required as a cofactor. Requires Zn(2+) as cofactor.

It carries out the reaction RNA(n) + a ribonucleoside 5'-triphosphate = RNA(n+1) + diphosphate. DNA-dependent RNA polymerase catalyzes the transcription of DNA into RNA using the four ribonucleoside triphosphates as substrates. This Kineococcus radiotolerans (strain ATCC BAA-149 / DSM 14245 / SRS30216) protein is DNA-directed RNA polymerase subunit beta'.